The chain runs to 438 residues: GTPase Obg (438 aa).

The region spanning 1–159 (MAFRDVLNIE…RRVRLELRLI (159 aa)) is the Obg domain. One can recognise an OBG-type G domain in the interval 160–332 (ADVGLVGYPN…LRETLFQLLP (173 aa)). ATP contacts are provided by residues 166 to 173 (GYPNAGKS), 191 to 195 (FTTLS), 219 to 222 (DIPG), 285 to 288 (NKVE), and 313 to 315 (SAK). Serine 173 and threonine 193 together coordinate Mg(2+). The region spanning 357 to 435 (IVFREDAPAK…IGTFRFEYFD (79 aa)) is the OCT domain.

The protein belongs to the TRAFAC class OBG-HflX-like GTPase superfamily. OBG GTPase family. In terms of assembly, monomer. The cofactor is Mg(2+).

The protein resides in the cytoplasm. Functionally, an essential GTPase which binds GTP, GDP and possibly (p)ppGpp with moderate affinity, with high nucleotide exchange rates and a fairly low GTP hydrolysis rate. Plays a role in control of the cell cycle, stress response, ribosome biogenesis and in those bacteria that undergo differentiation, in morphogenesis control. The chain is GTPase Obg from Deinococcus radiodurans (strain ATCC 13939 / DSM 20539 / JCM 16871 / CCUG 27074 / LMG 4051 / NBRC 15346 / NCIMB 9279 / VKM B-1422 / R1).